The sequence spans 361 residues: Tetraacyldisaccharide 4'-kinase (361 aa).

68–75 (TVGGTGKT) contacts ATP.

This sequence belongs to the LpxK family.

It catalyses the reaction a lipid A disaccharide + ATP = a lipid IVA + ADP + H(+). It participates in glycolipid biosynthesis; lipid IV(A) biosynthesis; lipid IV(A) from (3R)-3-hydroxytetradecanoyl-[acyl-carrier-protein] and UDP-N-acetyl-alpha-D-glucosamine: step 6/6. Its function is as follows. Transfers the gamma-phosphate of ATP to the 4'-position of a tetraacyldisaccharide 1-phosphate intermediate (termed DS-1-P) to form tetraacyldisaccharide 1,4'-bis-phosphate (lipid IVA). The chain is Tetraacyldisaccharide 4'-kinase from Pelobacter propionicus (strain DSM 2379 / NBRC 103807 / OttBd1).